A 535-amino-acid polypeptide reads, in one-letter code: Phosphoenolpyruvate carboxykinase (ATP) (535 aa).

Residues arginine 59, tyrosine 201, and lysine 207 each contribute to the substrate site. ATP contacts are provided by residues lysine 207, histidine 226, and 243-251 (GLSGTGKTT). Mn(2+) is bound by residues lysine 207 and histidine 226. Residue aspartate 264 participates in Mn(2+) binding. Residues glutamate 292, arginine 328, 444–445 (RI), and threonine 450 each bind ATP. Residue arginine 328 coordinates substrate.

This sequence belongs to the phosphoenolpyruvate carboxykinase (ATP) family. The cofactor is Mn(2+).

It is found in the cytoplasm. The catalysed reaction is oxaloacetate + ATP = phosphoenolpyruvate + ADP + CO2. The protein operates within carbohydrate biosynthesis; gluconeogenesis. Involved in the gluconeogenesis. Catalyzes the conversion of oxaloacetate (OAA) to phosphoenolpyruvate (PEP) through direct phosphoryl transfer between the nucleoside triphosphate and OAA. The protein is Phosphoenolpyruvate carboxykinase (ATP) of Bacteroides fragilis (strain ATCC 25285 / DSM 2151 / CCUG 4856 / JCM 11019 / LMG 10263 / NCTC 9343 / Onslow / VPI 2553 / EN-2).